We begin with the raw amino-acid sequence, 666 residues long: MSSLICFIFLFLFSFITSFTASAQNPFYLYHNCSITTTYSSNSTYSTNLKTLLSSLSSRNASYSTGFQNATAGQAPDMVTGLFLCRGNVSPEVCRSCIALSVNESLSRCPNEREAVFYYEQCMLRYSNRNILSTLNTDGGVFMQNARNPISVKQDRFRDLVLNPMNLAAIEAARSIKRFAVTKFDLNALQSLYGMVQCTPDLTEQDCLDCLQQSINQVTYDKIGGRTFLPSCTSRYDNYEFYNEFNVGTPQDSSPRPGKGGNSSVIVIAVVVPITVLFLLFVAFFSVRRAKRKKTIGAIPLFKVKRKETEVTEPPAETTDGDDITTAGSLQFDFKAIVAATDIFLPINKLGQGGFGEVYKGTFPSGVQVAVKRLSKNSGQGEKEFENEVVVVAKLQHRNLVKLLGYCLEGEEKILVYEFVPNKSLDYFLFDPTMQGQLDWSRRYKIIGGIARGILYLHQDSRLTIIHRDLKAGNILLDADMNPKVADFGMARIFGMDQTEANTRRVVGTYGYMAPEYAMYGKFSMKSDVYSFGVLVLEIVSGMKNSSLDQMDGSISNLVTYTWRLWSNGSPSELVDPSFGDNYQTSEITRCIHIALLCVQEDANDRPTMSAIVQMLTTSSIALAVPRPPGFFLRSKQEQAERACPSMDTSDLFSIDEASITSVAPR.

A signal peptide spans 1 to 23; that stretch reads MSSLICFIFLFLFSFITSFTASA. Residues 24-264 are Extracellular-facing; sequence QNPFYLYHNC…PRPGKGGNSS (241 aa). 2 Gnk2-homologous domains span residues 27–131 and 137–241; these read FYLY…NRNI and TDGG…NYEF. 5 N-linked (GlcNAc...) asparagine glycosylation sites follow: Asn32, Asn42, Asn60, Asn69, and Asn103. Residue Asn262 is glycosylated (N-linked (GlcNAc...) asparagine). Residues 265–285 form a helical membrane-spanning segment; the sequence is VIVIAVVVPITVLFLLFVAFF. The Cytoplasmic portion of the chain corresponds to 286-666; that stretch reads SVRRAKRKKT…EASITSVAPR (381 aa). The 280-residue stretch at 344–623 folds into the Protein kinase domain; that stretch reads FLPINKLGQG…QMLTTSSIAL (280 aa). ATP is bound by residues 350–358 and Lys372; that span reads LGQGGFGEV. Position 417 is a phosphotyrosine (Tyr417). The active-site Proton acceptor is the Asp469. A Phosphothreonine modification is found at Thr509. Residue Tyr517 is modified to Phosphotyrosine.

The protein belongs to the protein kinase superfamily. Ser/Thr protein kinase family. CRK subfamily.

Its subcellular location is the membrane. The catalysed reaction is L-seryl-[protein] + ATP = O-phospho-L-seryl-[protein] + ADP + H(+). The enzyme catalyses L-threonyl-[protein] + ATP = O-phospho-L-threonyl-[protein] + ADP + H(+). The chain is Putative cysteine-rich receptor-like protein kinase 20 (CRK20) from Arabidopsis thaliana (Mouse-ear cress).